A 213-amino-acid polypeptide reads, in one-letter code: ATP phosphoribosyltransferase (213 aa).

Belongs to the ATP phosphoribosyltransferase family. Short subfamily. In terms of assembly, heteromultimer composed of HisG and HisZ subunits.

The protein resides in the cytoplasm. The catalysed reaction is 1-(5-phospho-beta-D-ribosyl)-ATP + diphosphate = 5-phospho-alpha-D-ribose 1-diphosphate + ATP. The protein operates within amino-acid biosynthesis; L-histidine biosynthesis; L-histidine from 5-phospho-alpha-D-ribose 1-diphosphate: step 1/9. Catalyzes the condensation of ATP and 5-phosphoribose 1-diphosphate to form N'-(5'-phosphoribosyl)-ATP (PR-ATP). Has a crucial role in the pathway because the rate of histidine biosynthesis seems to be controlled primarily by regulation of HisG enzymatic activity. This is ATP phosphoribosyltransferase (hisG) from Listeria monocytogenes serovar 1/2a (strain ATCC BAA-679 / EGD-e).